We begin with the raw amino-acid sequence, 90 residues long: MYLELHFQFLFRFFSLIPIPCTIPNFRYHTRLLISRNXVFMNKLKMALLVVFLVSLFACTTIHQPKETVKSRFLKNNRLNKISIINIYTT.

A helical membrane pass occupies residues 46-62 (MALLVVFLVSLFACTTI).

It localises to the membrane. This is an uncharacterized protein from Haemophilus influenzae (strain ATCC 51907 / DSM 11121 / KW20 / Rd).